The sequence spans 198 residues: Snake venom metalloproteinase BpirMP (198 aa).

The 197-residue stretch at 1 to 197 (TYIEVAVVAD…HNPQCILNEP (197 aa)) folds into the Peptidase M12B domain. 2 residues coordinate Ca(2+): glutamate 4 and aspartate 88. 3 disulfides stabilise this stretch: cysteine 112–cysteine 192, cysteine 152–cysteine 176, and cysteine 154–cysteine 159. Histidine 137 contacts Zn(2+). Glutamate 138 is an active-site residue. 2 residues coordinate Zn(2+): histidine 141 and histidine 147. Ca(2+)-binding residues include cysteine 192 and asparagine 195.

Belongs to the venom metalloproteinase (M12B) family. P-I subfamily. In terms of assembly, monomer. Requires Zn(2+) as cofactor. In terms of tissue distribution, expressed by the venom gland.

It is found in the secreted. Inhibited by the chelating agents EDTA, EGTA and 1,10-phenanthroline. Is not inhibited by serine proteinase inhibitors aprotinin, leupeptin and benzamidine. In terms of biological role, zinc metalloprotease that preferentially degrades Aalpha chain of fibrinogen (FGA) (at a dose of 5 ug, whereas at a dose of 10 ug, both FGA and FGB are completely degraded). Degrades fibrin gel in a dose-dependent manner, as well blood clots formed in vitro (thrombolytic activity). Induces hemorrhage (in the dorsal skin of mice), with an MHD of 50 ug. The basal membrane components collagen (all chains of type IV) (COL4A4), fibronectin (FN1), laminin and nidogen are all degraded by this toxin. The chain is Snake venom metalloproteinase BpirMP from Bothrops pirajai (Piraja's lancehead).